The primary structure comprises 438 residues: Xylose isomerase (438 aa).

The Mg(2+) site is built by D306 and D308.

Belongs to the xylose isomerase family. In terms of assembly, homotetramer. Mg(2+) serves as cofactor.

Its subcellular location is the cytoplasm. The enzyme catalyses alpha-D-xylose = alpha-D-xylulofuranose. This chain is Xylose isomerase, found in Caldicellulosiruptor bescii (strain ATCC BAA-1888 / DSM 6725 / KCTC 15123 / Z-1320) (Anaerocellum thermophilum).